The following is a 160-amino-acid chain: Cytochrome b6-f complex subunit 4 (160 aa).

3 consecutive transmembrane segments (helical) span residues Leu36–Val56, Leu95–Glu115, and Thr131–Ile151.

It belongs to the cytochrome b family. PetD subfamily. The 4 large subunits of the cytochrome b6-f complex are cytochrome b6, subunit IV (17 kDa polypeptide, petD), cytochrome f and the Rieske protein, while the 4 small subunits are petG, petL, petM and petN. The complex functions as a dimer.

It localises to the plastid. The protein localises to the chloroplast thylakoid membrane. Its function is as follows. Component of the cytochrome b6-f complex, which mediates electron transfer between photosystem II (PSII) and photosystem I (PSI), cyclic electron flow around PSI, and state transitions. This Pisum sativum (Garden pea) protein is Cytochrome b6-f complex subunit 4.